The following is a 260-amino-acid chain: Small ribosomal subunit protein uS2 (260 aa).

The protein belongs to the universal ribosomal protein uS2 family.

The polypeptide is Small ribosomal subunit protein uS2 (Mesorhizobium japonicum (strain LMG 29417 / CECT 9101 / MAFF 303099) (Mesorhizobium loti (strain MAFF 303099))).